A 189-amino-acid chain; its full sequence is Inosine triphosphate pyrophosphatase (189 aa).

Position 14–19 (14–19 (TGNQNK)) interacts with ITP. Glu-42 serves as a coordination point for Mg(2+). ITP contacts are provided by residues Lys-54, 70–71 (DT), Lys-87, 146–149 (FGWD), Lys-167, and 172–173 (HR).

This sequence belongs to the HAM1 NTPase family. Homodimer. Mg(2+) serves as cofactor. The cofactor is Mn(2+).

It localises to the cytoplasm. The protein localises to the nucleus. It carries out the reaction ITP + H2O = IMP + diphosphate + H(+). The catalysed reaction is dITP + H2O = dIMP + diphosphate + H(+). It catalyses the reaction XTP + H2O = XMP + diphosphate + H(+). Pyrophosphatase that hydrolyzes non-canonical purine nucleotides such as inosine triphosphate (ITP), deoxyinosine triphosphate (dITP) or xanthosine 5'-triphosphate (XTP) to their respective monophosphate derivatives. The enzyme does not distinguish between the deoxy- and ribose forms. Probably excludes non-canonical purines from RNA and DNA precursor pools, thus preventing their incorporation into RNA and DNA and avoiding chromosomal lesions. The polypeptide is Inosine triphosphate pyrophosphatase (Pyricularia oryzae (strain 70-15 / ATCC MYA-4617 / FGSC 8958) (Rice blast fungus)).